The primary structure comprises 326 residues: Olfactory receptor 8A1 (326 aa).

Residues Met-1–Phe-45 are Extracellular-facing. Asn-22 is a glycosylation site (N-linked (GlcNAc...) asparagine). The chain crosses the membrane as a helical span at residues Leu-46–Ile-66. Over Cys-67–Tyr-77 the chain is Cytoplasmic. The helical transmembrane segment at Tyr-78–Val-100 threads the bilayer. Residues Asn-101 to Ser-116 lie on the Extracellular side of the membrane. An intrachain disulfide couples Cys-114 to Cys-195. Residues Gln-117 to Tyr-137 traverse the membrane as a helical segment. At Asp-138–Asn-150 the chain is on the cytoplasmic side. The helical transmembrane segment at Ile-151–Ile-171 threads the bilayer. Over Gly-172–Asn-222 the chain is Extracellular. The chain crosses the membrane as a helical span at residues Ile-223–Gly-243. Over Ile-244–His-260 the chain is Cytoplasmic. Residues Leu-261–Ile-281 traverse the membrane as a helical segment. Residues Ser-282–Glu-287 are Extracellular-facing. A helical membrane pass occupies residues Asn-288–Leu-308. Residues Arg-309–Phe-326 lie on the Cytoplasmic side of the membrane.

Belongs to the G-protein coupled receptor 1 family.

The protein localises to the cell membrane. Its function is as follows. Odorant receptor. This Homo sapiens (Human) protein is Olfactory receptor 8A1 (OR8A1).